A 276-amino-acid chain; its full sequence is Octanoyltransferase LipM (276 aa).

The BPL/LPL catalytic domain maps to 32 to 247; that stretch reads GALPPVIRFY…GFEKGLDIKL (216 aa). The active-site Acyl-thioester intermediate is the C149.

This sequence belongs to the octanoyltransferase LipM family. In terms of assembly, monomer.

The catalysed reaction is octanoyl-[ACP] + L-lysyl-[protein] = N(6)-octanoyl-L-lysyl-[protein] + holo-[ACP] + H(+). It participates in protein modification; protein lipoylation via endogenous pathway; protein N(6)-(lipoyl)lysine from octanoyl-[acyl-carrier-protein]. Catalyzes the transfer of endogenously produced octanoic acid from octanoyl-acyl-carrier-protein onto the lipoyl domain of GcvH, an intermediate carrier during protein lipoylation. The sequence is that of Octanoyltransferase LipM from Macrococcus caseolyticus (strain JCSC5402) (Macrococcoides caseolyticum).